The primary structure comprises 270 residues: Monofunctional glycosyltransferase (270 aa).

Positions 1–35 (MKRSDRYKTYNKPNDSNDSNQLHHNTYFKPVNKPQ) are disordered. Residues 11–24 (NKPNDSNDSNQLHH) are compositionally biased toward polar residues. Residues 47–67 (LLIPILIIIGIIIGVMYALSL) form a helical membrane-spanning segment.

It belongs to the glycosyltransferase 51 family.

It is found in the cell membrane. The catalysed reaction is [GlcNAc-(1-&gt;4)-Mur2Ac(oyl-L-Ala-gamma-D-Glu-L-Lys-D-Ala-D-Ala)](n)-di-trans,octa-cis-undecaprenyl diphosphate + beta-D-GlcNAc-(1-&gt;4)-Mur2Ac(oyl-L-Ala-gamma-D-Glu-L-Lys-D-Ala-D-Ala)-di-trans,octa-cis-undecaprenyl diphosphate = [GlcNAc-(1-&gt;4)-Mur2Ac(oyl-L-Ala-gamma-D-Glu-L-Lys-D-Ala-D-Ala)](n+1)-di-trans,octa-cis-undecaprenyl diphosphate + di-trans,octa-cis-undecaprenyl diphosphate + H(+). It functions in the pathway cell wall biogenesis; peptidoglycan biosynthesis. In terms of biological role, peptidoglycan polymerase that catalyzes glycan chain elongation using lipid-linked disaccharide-pentapeptide as the substrate. The chain is Monofunctional glycosyltransferase from Staphylococcus saprophyticus subsp. saprophyticus (strain ATCC 15305 / DSM 20229 / NCIMB 8711 / NCTC 7292 / S-41).